The following is a 32-amino-acid chain: Ranatuerin-2CSa (32 aa).

Residues C27 and C32 are joined by a disulfide bond.

As to expression, expressed by the skin glands.

It localises to the secreted. Its subcellular location is the target cell membrane. In terms of biological role, antibacterial peptide with amphipathic alpha-helical structure. Active against E.coli ATCC 25726 (MIC=4-5 uM) and S.aureus ATCC 25923 (MIC=8-10 uM). Has a weak hemolytic activity on human erythrocytes (LC(50)=150-160 uM). This Rana cascadae (Cascades frog) protein is Ranatuerin-2CSa.